The chain runs to 219 residues: Thymidylate kinase (219 aa).

7–14 contributes to the ATP binding site; sequence GIDGCGKT.

It belongs to the thymidylate kinase family.

The catalysed reaction is dTMP + ATP = dTDP + ADP. Functionally, phosphorylation of dTMP to form dTDP in both de novo and salvage pathways of dTTP synthesis. This Anaplasma phagocytophilum (strain HZ) protein is Thymidylate kinase.